A 629-amino-acid polypeptide reads, in one-letter code: Transmembrane 9 superfamily protein C1105.08 (629 aa).

Positions 1–26 (MLLPSIPSCSFSFVVFVSVLLQTCFS) are cleaved as a signal peptide. The Lumenal portion of the chain corresponds to 27-266 (FQLTPLSPKN…MHIESRQIRW (240 aa)). An N-linked (GlcNAc...) asparagine glycan is attached at N157. A helical transmembrane segment spans residues 267–287 (IFIIHSAIIDTFLIFVVSIIL). Topologically, residues 288–337 (YRTLNRDINKYNSAFVDQEDVQEDFGWKLVHGDVFRPPRRPMLFSILLGT) are cytoplasmic. Residues 338 to 358 (GAQLLFMSSGIVLFAIFGIVA) form a helical membrane-spanning segment. The Lumenal portion of the chain corresponds to 359 to 364 (PSRRGS). The helical transmembrane segment at 365–385 (LATATVALFIISGFVSGYVSA) threads the bilayer. At 386 to 401 (LSYKLMQGMLRKRNLL) the chain is on the cytoplasmic side. The chain crosses the membrane as a helical span at residues 402–422 (LTPFVVPGFMLAAALFFNMVF). The Lumenal segment spans residues 423–436 (WSKSSSSTVPFSSW). A helical membrane pass occupies residues 437 to 457 (LLLIFLYLLFTVPLSFVGSLI). Over 458 to 488 (GFRSREFVPPVRTNQIPRQIPSHSIWLSSFP) the chain is Cytoplasmic. The helical transmembrane segment at 489–509 (SAIIGGSIPFLVILIELFSIL) threads the bilayer. At 510–519 (DSLWFHPLYF) the chain is on the lumenal side. Residues 520–544 (MFGFSFFCFGILVTTCIMVSIITVY) traverse the membrane as a helical segment. Residues 545 to 558 (FQLCSENYNWWWRS) lie on the Cytoplasmic side of the membrane. Residues 559-579 (FITPGFCGIYVFIFSVFYWFF) form a helical membrane-spanning segment. The Lumenal portion of the chain corresponds to 580–598 (KISSSSLATAVLYFGYSLL). The chain crosses the membrane as a helical span at residues 599–619 (ISVLVFFLCGSVGFFGAFLFV). Residues 620-629 (NKIYASIKID) lie on the Cytoplasmic side of the membrane.

It belongs to the nonaspanin (TM9SF) (TC 9.A.2) family.

Its subcellular location is the golgi apparatus membrane. The protein resides in the vacuole membrane. In Schizosaccharomyces pombe (strain 972 / ATCC 24843) (Fission yeast), this protein is Transmembrane 9 superfamily protein C1105.08.